The chain runs to 96 residues: MGNCRSKQESHPICPNTQTPEPTEAEFRRAAVNSLYGRYNCKCCWFADRNLINCSDHYLCLRCLNVMLRTSNLCNICWKPLPTRISVPTEPTAPSE.

Basic and acidic residues predominate over residues 1–10 (MGNCRSKQES). A disordered region spans residues 1–21 (MGNCRSKQESHPICPNTQTPE). Glycine 2 carries N-myristoyl glycine; by host lipidation. An RING-type; atypical zinc finger spans residues 41-77 (CKCCWFADRNLINCSDHYLCLRCLNVMLRTSNLCNIC). The PTAP/PSAP motif motif lies at 91–94 (PTAP).

It belongs to the arenaviridae Z protein family. As to quaternary structure, interacts with protein NP; this interaction probably directs the encapsidated genome to budding sites. Interacts (via RING domain) with polymerase L; this interaction inhibits viral transcription and replication, Z partially blocks the product exit tunnel for the releasing nascent RNA product. Interacts with the glycoprotein complex; this interaction plays a role in virion budding. Interacts with host eIF4E; this interaction results in eIF4E reduced affinity for its substrate, the 5'-m7 G cap structure. Interacts (via late-budding domain) with host TSG101; this interaction is essential for budding and release of viral particles. Interacts with host RPLP0; this interaction may serve to load ribosome-like particles inside the virion. Interacts with host PML; this interaction induces PML bodies redistribution in the cytoplasm upon viral infection. In terms of processing, myristoylation is required for the role of RING finger protein Z in assembly and budding.

The protein resides in the virion. The protein localises to the host cytoplasm. It localises to the host perinuclear region. It is found in the host cell membrane. Its function is as follows. Plays a crucial role in virion assembly and budding. Expressed late in the virus life cycle, it acts as an inhibitor of viral transcription and RNA synthesis by interacting with the viral polymerase L. Presumably recruits the NP encapsidated genome to cellular membranes at budding sites via direct interaction with NP. Plays critical roles in the final steps of viral release by interacting with host TSG101, a member of the vacuolar protein-sorting pathway and using other cellular host proteins involved in vesicle formation pathway. The budding of the virus progeny occurs after association of protein Z with the viral glycoprotein complex SSP-GP1-GP2 at the cell periphery, step that requires myristoylation of protein Z. Also selectively represses protein production by associating with host eIF4E. In cell-based minigenome assay, has an inhibitory effect on the ribonucleoprotein machinery (vRNP), which is responsible for the replication and transcription of the viral genome. The chain is RING finger protein Z from Hylaeamys megacephalus (Large-headed rice rat).